Here is a 368-residue protein sequence, read N- to C-terminus: MKFQVISQDKEARHGMFNFNGNIIETPVFMPVGTYGTVKSLNIEEIKNTGSKIILSNALHLYLRPGQDIIKLHGSLHNFMNWNGPILTDSGGFQIFSLSNFCRIKEEGVIFKNHINGKKFFLTPELSMEIQIDLGSNIIMIFDECIAYNKDWEKTKFAMERSLNWSRRSRIHFDLKKKNKKNLLFGIIHGGSYKSLRDISLKELIKMDFDGYALGGLAVGESKLEMHDLLDHITPQIPKKKPRYLMGVGKPEDLIESVYRGIDMFDCVLPTRNARNGHLFVTNGIIKIRNAKYKKDLSVLDKKCTCYTCQNYSRSYLHHLDSCNEILGARLNTIHNLHYYQTLMFNIRNAIKQKKFDEFVSNFYNQKK.

The active-site Proton acceptor is the Asp89. Substrate is bound by residues 89–93 (DSGGF), Asp143, and Gly216. Residues 247–253 (GVGKPED) are RNA binding. The Nucleophile role is filled by Asp266. The RNA binding; important for wobble base 34 recognition stretch occupies residues 271–275 (TRNAR). Residues Cys304, Cys306, Cys309, and His335 each contribute to the Zn(2+) site.

Belongs to the queuine tRNA-ribosyltransferase family. Homodimer. Within each dimer, one monomer is responsible for RNA recognition and catalysis, while the other monomer binds to the replacement base PreQ1. Zn(2+) is required as a cofactor.

The catalysed reaction is 7-aminomethyl-7-carbaguanine + guanosine(34) in tRNA = 7-aminomethyl-7-carbaguanosine(34) in tRNA + guanine. It participates in tRNA modification; tRNA-queuosine biosynthesis. Functionally, catalyzes the base-exchange of a guanine (G) residue with the queuine precursor 7-aminomethyl-7-deazaguanine (PreQ1) at position 34 (anticodon wobble position) in tRNAs with GU(N) anticodons (tRNA-Asp, -Asn, -His and -Tyr). Catalysis occurs through a double-displacement mechanism. The nucleophile active site attacks the C1' of nucleotide 34 to detach the guanine base from the RNA, forming a covalent enzyme-RNA intermediate. The proton acceptor active site deprotonates the incoming PreQ1, allowing a nucleophilic attack on the C1' of the ribose to form the product. After dissociation, two additional enzymatic reactions on the tRNA convert PreQ1 to queuine (Q), resulting in the hypermodified nucleoside queuosine (7-(((4,5-cis-dihydroxy-2-cyclopenten-1-yl)amino)methyl)-7-deazaguanosine). This is Queuine tRNA-ribosyltransferase from Buchnera aphidicola subsp. Schizaphis graminum (strain Sg).